The following is an 856-amino-acid chain: Lon protease homolog 2, peroxisomal (856 aa).

In terms of domain architecture, Lon N-terminal spans 13–222 (LPLLLTHEGV…VTIPLLLRQI (210 aa)). 379–386 (GPPGVGKT) serves as a coordination point for ATP. The segment covering 586-608 (GQHREHKSEHLEAPEGEERKESV) has biased composition (basic and acidic residues). Positions 586-614 (GQHREHKSEHLEAPEGEERKESVPEGSKS) are disordered. The Lon proteolytic domain maps to 655–841 (LNQPGVAIGL…DEVLNAAFDG (187 aa)). Residues Ser747 and Lys790 contribute to the active site. A Microbody targeting signal motif is present at residues 854 to 856 (SKL).

This sequence belongs to the peptidase S16 family.

Its subcellular location is the peroxisome matrix. The catalysed reaction is Hydrolysis of proteins in presence of ATP.. Its function is as follows. ATP-dependent serine protease that mediates the selective degradation of misfolded and unassembled polypeptides in the peroxisomal matrix. Necessary for type 2 peroxisome targeting signal (PTS2)-containing protein processing and facilitates peroxisome matrix protein import. This chain is Lon protease homolog 2, peroxisomal (lonp2), found in Xenopus laevis (African clawed frog).